Reading from the N-terminus, the 61-residue chain is Short neurotoxin 1 (61 aa).

Intrachain disulfides connect C3–C23, C17–C40, C42–C53, and C54–C59.

It belongs to the three-finger toxin family. Short-chain subfamily. Type I alpha-neurotoxin sub-subfamily. As to expression, expressed by the venom gland.

It is found in the secreted. Binds to muscle nicotinic acetylcholine receptor (nAChR) and inhibit acetylcholine from binding to the receptor, thereby impairing neuromuscular transmission. Its function is as follows. Produces peripheral paralysis by blocking neuromuscular transmission at the postsynaptic site. Binds to the muscular nicotinic acetylcholine receptor. The sequence is that of Short neurotoxin 1 from Naja annulifera (Banded Egyptian cobra).